The primary structure comprises 146 residues: Large ribosomal subunit protein uL15 (146 aa).

Over residues 1-18 the composition is skewed to basic and acidic residues; it reads MKLHELKPSEGSRKERNR. The tract at residues 1 to 57 is disordered; it reads MKLHELKPSEGSRKERNRVGRGIGSGNGKTSGKGHKGQNARSGGGVRPGFEGGQMPL. Gly residues-rich tracts occupy residues 21-31 and 42-52; these read RGIGSGNGKTS and SGGGVRPGFEG.

The protein belongs to the universal ribosomal protein uL15 family. Part of the 50S ribosomal subunit.

Its function is as follows. Binds to the 23S rRNA. The protein is Large ribosomal subunit protein uL15 of Bacillus pumilus (strain SAFR-032).